The following is a 421-amino-acid chain: UDP-N-acetylglucosamine 1-carboxyvinyltransferase (421 aa).

22 to 23 (KN) contributes to the phosphoenolpyruvate binding site. R92 contacts UDP-N-acetyl-alpha-D-glucosamine. The active-site Proton donor is the C116. The residue at position 116 (C116) is a 2-(S-cysteinyl)pyruvic acid O-phosphothioketal. Residues 121 to 125 (RPVDQ), D308, and I330 contribute to the UDP-N-acetyl-alpha-D-glucosamine site.

It belongs to the EPSP synthase family. MurA subfamily.

Its subcellular location is the cytoplasm. It carries out the reaction phosphoenolpyruvate + UDP-N-acetyl-alpha-D-glucosamine = UDP-N-acetyl-3-O-(1-carboxyvinyl)-alpha-D-glucosamine + phosphate. The protein operates within cell wall biogenesis; peptidoglycan biosynthesis. Functionally, cell wall formation. Adds enolpyruvyl to UDP-N-acetylglucosamine. In Ralstonia nicotianae (strain ATCC BAA-1114 / GMI1000) (Ralstonia solanacearum), this protein is UDP-N-acetylglucosamine 1-carboxyvinyltransferase.